The following is an 88-amino-acid chain: Small ribosomal subunit protein uS17 (88 aa).

Belongs to the universal ribosomal protein uS17 family. In terms of assembly, part of the 30S ribosomal subunit.

One of the primary rRNA binding proteins, it binds specifically to the 5'-end of 16S ribosomal RNA. The chain is Small ribosomal subunit protein uS17 from Lactobacillus helveticus (strain DPC 4571).